A 179-amino-acid chain; its full sequence is Cytochrome c-type biogenesis protein CcmE (179 aa).

The Cytoplasmic segment spans residues 1–8 (MTPRRKSR). The chain crosses the membrane as a helical; Signal-anchor for type II membrane protein span at residues 9 to 29 (MTVILFVLLGISIASALVLYA). The Periplasmic segment spans residues 30-179 (LRQNIDLFYT…QKTSMQEGQK (150 aa)). 2 residues coordinate heme: His131 and Tyr135. The disordered stretch occupies residues 151–179 (MGVADLKGESERDRQEKAYQKTSMQEGQK). The span at 156–169 (LKGESERDRQEKAY) shows a compositional bias: basic and acidic residues. Over residues 170–179 (QKTSMQEGQK) the composition is skewed to polar residues.

Belongs to the CcmE/CycJ family.

The protein localises to the cell inner membrane. Its function is as follows. Heme chaperone required for the biogenesis of c-type cytochromes. Transiently binds heme delivered by CcmC and transfers the heme to apo-cytochromes in a process facilitated by CcmF and CcmH. The polypeptide is Cytochrome c-type biogenesis protein CcmE (Pasteurella multocida (strain Pm70)).